The sequence spans 103 residues: O2 contryphan Vc1 (103 aa).

Positions 1–23 are cleaved as a signal peptide; sequence MGKLTILFLVAAALLSTQVMVQG. Positions 24 to 67 are excised as a propeptide; the sequence is DGAHERTEAEEPQHHGAKRQDGTGGYPVDDVDMMQRIFRTPLKR. Basic and acidic residues predominate over residues 25-44; the sequence is GAHERTEAEEPQHHGAKRQD. A disordered region spans residues 25 to 50; sequence GAHERTEAEEPQHHGAKRQDGTGGYP. Gln68 is subject to Pyrrolidone carboxylic acid. Cys70 and Cys83 are oxidised to a cystine. A propeptide spanning residues 99–103 is cleaved from the precursor; it reads RRGRQ.

This sequence belongs to the O2 superfamily. In terms of processing, pyrrolidone carboxylic acid at position 1 has no significant effect on the structure of contryphan-Vc1. In terms of tissue distribution, expressed by the venom gland.

The protein localises to the secreted. In terms of biological role, unknown. Intracranial injection of the peptide into mice does not produce toxic effects. In addition, the peptide does not produce any observable changes to normal or depolarization-induced intracellular calcium levels in mouse dorsal root ganglion cells. In Conus victoriae (Queen Victoria cone), this protein is O2 contryphan Vc1.